We begin with the raw amino-acid sequence, 239 residues long: 6-phosphogluconolactonase (239 aa).

This sequence belongs to the glucosamine/galactosamine-6-phosphate isomerase family. 6-phosphogluconolactonase subfamily.

It catalyses the reaction 6-phospho-D-glucono-1,5-lactone + H2O = 6-phospho-D-gluconate + H(+). Its pathway is carbohydrate degradation; pentose phosphate pathway; D-ribulose 5-phosphate from D-glucose 6-phosphate (oxidative stage): step 2/3. Functionally, hydrolysis of 6-phosphogluconolactone to 6-phosphogluconate. This is 6-phosphogluconolactonase (pgl) from Xylella fastidiosa (strain Temecula1 / ATCC 700964).